A 92-amino-acid chain; its full sequence is Small ribosomal subunit protein uS19 (92 aa).

Belongs to the universal ribosomal protein uS19 family.

Its function is as follows. Protein S19 forms a complex with S13 that binds strongly to the 16S ribosomal RNA. This chain is Small ribosomal subunit protein uS19, found in Staphylococcus carnosus (strain TM300).